The primary structure comprises 348 residues: Anthranilate phosphoribosyltransferase (348 aa).

Residues G81, 84 to 85, T89, 91 to 94, 109 to 117, and S121 each bind 5-phospho-alpha-D-ribose 1-diphosphate; these read GD, NIST, and KHGNRAMSS. G81 serves as a coordination point for anthranilate. S93 lines the Mg(2+) pocket. N112 lines the anthranilate pocket. Residue R167 participates in anthranilate binding. Positions 226 and 227 each coordinate Mg(2+).

The protein belongs to the anthranilate phosphoribosyltransferase family. In terms of assembly, homodimer. Mg(2+) is required as a cofactor.

It carries out the reaction N-(5-phospho-beta-D-ribosyl)anthranilate + diphosphate = 5-phospho-alpha-D-ribose 1-diphosphate + anthranilate. It participates in amino-acid biosynthesis; L-tryptophan biosynthesis; L-tryptophan from chorismate: step 2/5. Its function is as follows. Catalyzes the transfer of the phosphoribosyl group of 5-phosphorylribose-1-pyrophosphate (PRPP) to anthranilate to yield N-(5'-phosphoribosyl)-anthranilate (PRA). This Thermomicrobium roseum (strain ATCC 27502 / DSM 5159 / P-2) protein is Anthranilate phosphoribosyltransferase.